Consider the following 102-residue polypeptide: S-phase delaying protein 2 (102 aa).

The segment at 43–62 (FPSYHKDQTDRNELPQQKHD) is disordered. Residues 46–62 (YHKDQTDRNELPQQKHD) are compositionally biased toward basic and acidic residues.

It belongs to the DIF1/spd1 family.

Its subcellular location is the cytoplasm. The protein resides in the nucleus. Its function is as follows. Regulates the ribonucleotide reductase activity. The protein is S-phase delaying protein 2 (spd2) of Schizosaccharomyces pombe (strain 972 / ATCC 24843) (Fission yeast).